Consider the following 153-residue polypeptide: Endoribonuclease YbeY (153 aa).

The Zn(2+) site is built by histidine 113, histidine 117, and histidine 123.

It belongs to the endoribonuclease YbeY family. It depends on Zn(2+) as a cofactor.

Its subcellular location is the cytoplasm. Single strand-specific metallo-endoribonuclease involved in late-stage 70S ribosome quality control and in maturation of the 3' terminus of the 16S rRNA. This is Endoribonuclease YbeY from Aliivibrio fischeri (strain ATCC 700601 / ES114) (Vibrio fischeri).